The chain runs to 2197 residues: Activating signal cointegrator 1 complex subunit 3 (2197 aa).

Ser-12 is subject to Phosphoserine. Coiled coils occupy residues 18 to 80 (KQDN…AKQI) and 328 to 356 (IQSE…KAGE). The Helicase ATP-binding 1 domain occupies 487 to 670 (DTAYNTNENM…FLHVNPYIGL (184 aa)). 500–507 (APTGAGKT) provides a ligand contact to ATP. N6-acetyllysine is present on Lys-573. The DEVH box motif lies at 612–615 (DEVH). Residues 697 to 915 (QLNNMDEVCY…GTVTNVEEAV (219 aa)) form the Helicase C-terminal 1 domain. Residues 979–1288 (STDLGRTASH…GAEAVCIINF (310 aa)) form the SEC63 1 domain. Residues 1337-1512 (HTLYHTDCNV…WLNIKQMGLF (176 aa)) form the Helicase ATP-binding 2 domain. 1350–1357 (APTGSGKT) contributes to the ATP binding site. Positions 1454–1457 (DEIH) match the DEIH box motif. One can recognise a Helicase C-terminal 2 domain in the interval 1565–1739 (RMLSSMTKLE…VLSDHLNAEI (175 aa)). One can recognise an SEC63 2 domain in the interval 1812–2175 (PLTCGRIASY…YLGLDQQYDI (364 aa)).

Belongs to the helicase family. In terms of assembly, identified in the ASCC complex that contains ASCC1, ASCC2 and ASCC3. Functions as a scaffolding subunit that interacts directly with both ASCC1 and ASCC2. Interacts directly with ALKBH3, and thereby recruits ALKBH3 to the ASCC complex. Part of the ASC-1/TRIP4 complex, that contains TRIP4, ASCC1, ASCC2 and ASCC3. Part of the RQT (ribosome quality control trigger) complex, that contains ASCC2, ASCC3 and TRIP4. Associates with ribosomes; recruited to collided ribosomes. Interacts with ZCCHC4. Interacts with ZNF598. Interacts with RPS3.

It is found in the nucleus. Its subcellular location is the nucleus speckle. It localises to the cytoplasm. The protein localises to the cytosol. The enzyme catalyses Couples ATP hydrolysis with the unwinding of duplex DNA by translocating in the 3'-5' direction.. It carries out the reaction ATP + H2O = ADP + phosphate + H(+). In terms of biological role, ATPase involved both in DNA repair and rescue of stalled ribosomes. 3'-5' DNA helicase involved in repair of alkylated DNA: promotes DNA unwinding to generate single-stranded substrate needed for ALKBH3, enabling ALKBH3 to process alkylated N3-methylcytosine (3mC) within double-stranded regions. Also involved in activation of the ribosome quality control (RQC) pathway, a pathway that degrades nascent peptide chains during problematic translation. Drives the splitting of stalled ribosomes that are ubiquitinated in a ZNF598-dependent manner, as part of the ribosome quality control trigger (RQT) complex. Part of the ASC-1 complex that enhances NF-kappa-B, SRF and AP1 transactivation. The protein is Activating signal cointegrator 1 complex subunit 3 (Ascc3) of Rattus norvegicus (Rat).